A 163-amino-acid chain; its full sequence is Phosphopantetheine adenylyltransferase (163 aa).

Ser-9 contacts substrate. Residues Ser-9 to Phe-10 and His-17 contribute to the ATP site. Positions 41, 78, and 92 each coordinate substrate. ATP is bound by residues Gly-93 to Arg-95, Glu-103, and Ser-128 to Thr-134.

This sequence belongs to the bacterial CoaD family. In terms of assembly, homohexamer. Mg(2+) is required as a cofactor.

It is found in the cytoplasm. It catalyses the reaction (R)-4'-phosphopantetheine + ATP + H(+) = 3'-dephospho-CoA + diphosphate. It functions in the pathway cofactor biosynthesis; coenzyme A biosynthesis; CoA from (R)-pantothenate: step 4/5. Functionally, reversibly transfers an adenylyl group from ATP to 4'-phosphopantetheine, yielding dephospho-CoA (dPCoA) and pyrophosphate. This chain is Phosphopantetheine adenylyltransferase, found in Rhizobium meliloti (strain 1021) (Ensifer meliloti).